The sequence spans 485 residues: Hemolysin (485 aa).

The signal sequence occupies residues 1–28 (MKNFKGRKFLTCVLVSLCTLNYSSISFA). 4 beta stranded membrane-spanning segments follow: residues 196-209 (KAQIASALNVNAKY), 216-225 (IDFNAVANGE), 294-303 (SKDVQAAFKA), and 311-323 (ETSGQYKDIFEES). Residues 465-475 (ECTGLAWEWWR) carry the Conserved undecapeptide motif.

The protein belongs to the cholesterol-dependent cytolysin family. In terms of assembly, homooligomeric pore complex of 35 to 50 subunits; when inserted in the host membrane.

Its subcellular location is the secreted. The protein localises to the host cell membrane. Its function is as follows. A cholesterol-dependent toxin with hemolytic activity against host red blood cells. Causes cytolysis by forming pores in cholesterol containing host membranes. binding to target membranes, the protein undergoes a major conformation change, leading to its insertion in the host membrane and formation of an oligomeric pore complex. Cholesterol is required for binding to host membranes, membrane insertion and pore formation; cholesterol binding is mediated by a Thr-Leu pair in the C-terminus. Can be reversibly inactivated by oxidation. This is Hemolysin from Bacillus cereus.